A 615-amino-acid polypeptide reads, in one-letter code: Nuclear receptor subfamily 1 group D member 1 (615 aa).

Positions 1-12 (MTTLDSNNNTGG) are enriched in polar residues. The tract at residues 1 to 70 (MTTLDSNNNT…TQDPARSFGT (70 aa)) is required for phosphorylation by CSNK1E and cytoplasmic localization. The interval 1–120 (MTTLDSNNNT…SSRVSPSKGT (120 aa)) is disordered. The segment at 1–129 (MTTLDSNNNT…TSNITKLNGM (129 aa)) is modulating. Low complexity predominate over residues 14-34 (ITYIGSSGSSPSRTSPESLYS). A compositionally biased stretch (polar residues) spans 35 to 48 (DSSNGSFQSLTQGC). Residues 49 to 285 (PTYFPPSPTG…PPRSPSPEPT (237 aa)) are crucial for activation of GJA1. A phosphoserine; by GSK3-beta mark is found at S55 and S59. A compositionally biased stretch (low complexity) spans 72–103 (PPSLSDDSSPSSASSSSSSSSSSFYNGSPPGS). The nuclear receptor DNA-binding region spans 130–206 (VLLCKVCGDV…VGMSRDAVRF (77 aa)). NR C4-type zinc fingers lie at residues 133–153 (CKVC…CEGC) and 170–194 (CLKN…FKKC). N6-acetyllysine; by KAT5 occurs at positions 192 and 193. Disordered stretches follow at residues 235-287 (LCPL…PTVE), 312-337 (PGNF…SQGC), and 357-385 (NGLR…PNSN). Positions 253–262 (PSPPPAPAPT) are enriched in pro residues. T275 bears the Phosphothreonine; by CDK1 mark. Positions 285 to 615 (TVEDVISQVA…KLLSFRVDAQ (331 aa)) constitute an NR LBD domain. K401 carries the post-translational modification N6-acetyllysine. A heme-binding site is contributed by C419. N6-acetyllysine is present on K592. Residue H603 participates in heme binding.

It belongs to the nuclear hormone receptor family. NR1 subfamily. As to quaternary structure, binds DNA as a monomer or a homodimer. Interacts with C1D, NR2E3, SP1 and ZNHIT1. Interacts with OPHN1 (via C-terminus). Interacts with PER2; the interaction associates PER2 to BMAL1 promoter region. Interacts with CRY1. Interacts with CCAR2. Interacts with SIAH2. Interacts with FBXW7 and CDK1. Interacts with HUWE1. Interacts with NR0B2. Interacts with NFIL3. Interacts (via domain NR LBD) with HSP90AA1 and HSP90AB1. Post-translationally, ubiquitinated, leading to its proteasomal degradation. Ubiquitinated by the SCF(FBXW7) complex when phosphorylated by CDK1 leading to its proteasomal degradation. Ubiquitinated by SIAH2; leading to its proteasomal degradation. Rapidly ubiquitinated in response to inflammatory triggers and sumoylation is a prerequisite to its ubiquitination. In terms of processing, sumoylated by UBE2I, desumoylated by SENP1, and sumoylation is a prerequisite to its ubiquitination. Phosphorylated by CSNK1E; phosphorylation enhances its cytoplasmic localization. Post-translationally, undergoes lysosome-mediated degradation in a time-dependent manner in the liver.

The protein resides in the nucleus. The protein localises to the cytoplasm. Its subcellular location is the cell projection. It is found in the dendrite. It localises to the dendritic spine. Transcriptional repressor which coordinates circadian rhythm and metabolic pathways in a heme-dependent manner. Integral component of the complex transcription machinery that governs circadian rhythmicity and forms a critical negative limb of the circadian clock by directly repressing the expression of core clock components BMAL1, CLOCK and CRY1. Also regulates genes involved in metabolic functions, including lipid and bile acid metabolism, adipogenesis, gluconeogenesis and the macrophage inflammatory response. Acts as a receptor for heme which stimulates its interaction with the NCOR1/HDAC3 corepressor complex, enhancing transcriptional repression. Recognizes two classes of DNA response elements within the promoter of its target genes and can bind to DNA as either monomers or homodimers, depending on the nature of the response element. Binds as a monomer to a response element composed of the consensus half-site motif 5'-[A/G]GGTCA-3' preceded by an A/T-rich 5' sequence (RevRE), or as a homodimer to a direct repeat of the core motif spaced by two nucleotides (RevDR-2). Acts as a potent competitive repressor of ROR alpha (RORA) function and regulates the levels of its ligand heme by repressing the expression of PPARGC1A, a potent inducer of heme synthesis. Regulates lipid metabolism by repressing the expression of APOC3 and by influencing the activity of sterol response element binding proteins (SREBPs); represses INSIG2 which interferes with the proteolytic activation of SREBPs which in turn govern the rhythmic expression of enzymes with key functions in sterol and fatty acid synthesis. Regulates gluconeogenesis via repression of G6PC1 and PEPCK and adipocyte differentiation via repression of PPARG. Regulates glucagon release in pancreatic alpha-cells via the AMPK-NAMPT-SIRT1 pathway and the proliferation, glucose-induced insulin secretion and expression of key lipogenic genes in pancreatic-beta cells. Positively regulates bile acid synthesis by increasing hepatic expression of CYP7A1 via repression of NR0B2 and NFIL3 which are negative regulators of CYP7A1. Modulates skeletal muscle oxidative capacity by regulating mitochondrial biogenesis and autophagy; controls mitochondrial biogenesis and respiration by interfering with the STK11-PRKAA1/2-SIRT1-PPARGC1A signaling pathway. Represses the expression of SERPINE1/PAI1, an important modulator of cardiovascular disease and the expression of inflammatory cytokines and chemokines in macrophages. Represses gene expression at a distance in macrophages by inhibiting the transcription of enhancer-derived RNAs (eRNAs). Plays a role in the circadian regulation of body temperature and negatively regulates thermogenic transcriptional programs in brown adipose tissue (BAT); imposes a circadian oscillation in BAT activity, increasing body temperature when awake and depressing thermogenesis during sleep. In concert with NR2E3, regulates transcriptional networks critical for photoreceptor development and function. In addition to its activity as a repressor, can also act as a transcriptional activator. In the ovarian granulosa cells acts as a transcriptional activator of STAR which plays a role in steroid biosynthesis. In collaboration with SP1, activates GJA1 transcription in a heme-independent manner. Represses the transcription of CYP2B10, CYP4A10 and CYP4A14. Represses the transcription of CES2. Represses and regulates the circadian expression of TSHB in a NCOR1-dependent manner. Negatively regulates the protein stability of NR3C1 and influences the time-dependent subcellular distribution of NR3C1, thereby affecting its transcriptional regulatory activity. Plays a critical role in the circadian control of neutrophilic inflammation in the lung; under resting, non-stress conditions, acts as a rhythmic repressor to limit inflammatory activity whereas in the presence of inflammatory triggers undergoes ubiquitin-mediated degradation thereby relieving inhibition of the inflammatory response. Plays a key role in the circadian regulation of microglial activation and neuroinflammation; suppresses microglial activation through the NF-kappaB pathway in the central nervous system. Plays a role in the regulation of the diurnal rhythms of lipid and protein metabolism in the skeletal muscle via transcriptional repression of genes controlling lipid and amino acid metabolism in the muscle. This chain is Nuclear receptor subfamily 1 group D member 1 (Nr1d1), found in Rattus norvegicus (Rat).